Consider the following 194-residue polypeptide: Lectin-C (194 aa).

An N-terminal signal peptide occupies residues methionine 1–glycine 26. The propeptide at glutamine 27–glycine 44 is removed in mature form. Chitin-binding type-1 domains lie at alanine 45–tyrosine 86, asparagine 87–tyrosine 127, and tryptophan 128–leucine 168. Cystine bridges form between cysteine 48/cysteine 63, cysteine 57/cysteine 69, cysteine 62/cysteine 76, cysteine 80/cysteine 84, cysteine 89/cysteine 104, cysteine 98/cysteine 110, cysteine 103/cysteine 117, cysteine 121/cysteine 125, cysteine 130/cysteine 145, cysteine 139/cysteine 151, cysteine 144/cysteine 158, and cysteine 162/cysteine 166. Residues leucine 171 to serine 194 constitute a propeptide, removed in mature form.

As to quaternary structure, homodimer. The homodimers are asymmetric; formed in a 'head-to-tail' fashion via hydrophobic interactions between aromatic residues of the carbohydrate-binding sites of each subunit.

In terms of biological role, N-acetyl-D-glucosamine binding lectin. Almost no hemagglutinating activity towards human erythrocytes. Low mitogenic activity towards human peripheral blood lymphocytes. This is Lectin-C from Phytolacca americana (American pokeweed).